Reading from the N-terminus, the 163-residue chain is uncharacterized protein (163 aa).

The interval Pro-128–Val-163 is disordered. Basic residues predominate over residues Lys-129 to Val-163.

This is an uncharacterized protein from Sulfurisphaera tokodaii (strain DSM 16993 / JCM 10545 / NBRC 100140 / 7) (Sulfolobus tokodaii).